We begin with the raw amino-acid sequence, 425 residues long: E3 ubiquitin-protein ligase TRIM31 (425 aa).

An RING-type zinc finger spans residues 16-57 (CPICLDILQKPVTIDCGHNFCLKCITQIGETSCGFFKCPLCK). The B box-type zinc finger occupies 90 to 131 (RKEATCPRHQEMFHYFCEDDGKFLCFVCRESKDHKSHNVSLI). Zn(2+) is bound by residues Cys-95, His-98, Cys-117, and His-123. Coiled coils occupy residues 126 to 162 (HNVS…VKAQ) and 270 to 307 (LELE…DENR). The segment at 328 to 360 (HKMNKTSEPGSSSAGGRTTSGPPNHHSSAPSHS) is disordered. A compositionally biased stretch (low complexity) spans 336 to 360 (PGSSSAGGRTTSGPPNHHSSAPSHS).

This sequence belongs to the TRIM/RBCC family. May form oligomers. Interacts with isoform p52shc of SHC1. Post-translationally, auto-ubiquitinated (in vitro). In terms of tissue distribution, up-regulated in gastric adenocarcinomas.

Its subcellular location is the cytoplasm. The protein resides in the mitochondrion. The catalysed reaction is S-ubiquitinyl-[E2 ubiquitin-conjugating enzyme]-L-cysteine + [acceptor protein]-L-lysine = [E2 ubiquitin-conjugating enzyme]-L-cysteine + N(6)-ubiquitinyl-[acceptor protein]-L-lysine.. The protein operates within protein modification; protein ubiquitination. Functionally, E3 ubiquitin-protein ligase that acts as a regulator of antiviral immune response and inflammation by mediating ubiquitination of substrates. Acts as a regulator of innate immune defense against viruses by mediating 'Lys-63'-linked ubiquitination of MAVS, promoting MAVS polymerization and formation of three-stranded helical filaments on mitochondria. Acts as a negative regulator of the NLRP3 inflammasome by catalyzing 'Lys-48'-linked ubiquitination of NLRP3, leading to its degradation. Regulator of Src-induced anchorage independent cell growth. This Homo sapiens (Human) protein is E3 ubiquitin-protein ligase TRIM31.